The chain runs to 154 residues: Lipoprotein signal peptidase (154 aa).

2 helical membrane-spanning segments follow: residues 55 to 75 (GHMW…IYIM) and 84 to 104 (LFSI…IDRI). Catalysis depends on residues Asp111 and Asp129. Residues 124–144 (IFNVADAALSVGVVLMLVYVF) form a helical membrane-spanning segment.

The protein belongs to the peptidase A8 family.

It localises to the cell membrane. It carries out the reaction Release of signal peptides from bacterial membrane prolipoproteins. Hydrolyzes -Xaa-Yaa-Zaa-|-(S,diacylglyceryl)Cys-, in which Xaa is hydrophobic (preferably Leu), and Yaa (Ala or Ser) and Zaa (Gly or Ala) have small, neutral side chains.. It participates in protein modification; lipoprotein biosynthesis (signal peptide cleavage). This protein specifically catalyzes the removal of signal peptides from prolipoproteins. This Listeria innocua serovar 6a (strain ATCC BAA-680 / CLIP 11262) protein is Lipoprotein signal peptidase.